A 127-amino-acid chain; its full sequence is Ribonuclease P protein component (127 aa).

It belongs to the RnpA family. Consists of a catalytic RNA component (M1 or rnpB) and a protein subunit.

The catalysed reaction is Endonucleolytic cleavage of RNA, removing 5'-extranucleotides from tRNA precursor.. Functionally, RNaseP catalyzes the removal of the 5'-leader sequence from pre-tRNA to produce the mature 5'-terminus. It can also cleave other RNA substrates such as 4.5S RNA. The protein component plays an auxiliary but essential role in vivo by binding to the 5'-leader sequence and broadening the substrate specificity of the ribozyme. The protein is Ribonuclease P protein component of Corynebacterium urealyticum (strain ATCC 43042 / DSM 7109).